The primary structure comprises 292 residues: Elongation factor Ts (292 aa).

An involved in Mg(2+) ion dislocation from EF-Tu region spans residues 82–85; that stretch reads TDFV.

It belongs to the EF-Ts family.

It is found in the cytoplasm. In terms of biological role, associates with the EF-Tu.GDP complex and induces the exchange of GDP to GTP. It remains bound to the aminoacyl-tRNA.EF-Tu.GTP complex up to the GTP hydrolysis stage on the ribosome. The polypeptide is Elongation factor Ts (Bordetella petrii (strain ATCC BAA-461 / DSM 12804 / CCUG 43448)).